Reading from the N-terminus, the 500-residue chain is Probable cytosol aminopeptidase (500 aa).

Mn(2+)-binding residues include Lys265 and Asp270. Lys277 is an active-site residue. 3 residues coordinate Mn(2+): Asp288, Asp347, and Glu349. The active site involves Arg351.

Belongs to the peptidase M17 family. The cofactor is Mn(2+).

Its subcellular location is the cytoplasm. It catalyses the reaction Release of an N-terminal amino acid, Xaa-|-Yaa-, in which Xaa is preferably Leu, but may be other amino acids including Pro although not Arg or Lys, and Yaa may be Pro. Amino acid amides and methyl esters are also readily hydrolyzed, but rates on arylamides are exceedingly low.. The catalysed reaction is Release of an N-terminal amino acid, preferentially leucine, but not glutamic or aspartic acids.. Its function is as follows. Presumably involved in the processing and regular turnover of intracellular proteins. Catalyzes the removal of unsubstituted N-terminal amino acids from various peptides. This is Probable cytosol aminopeptidase from Corynebacterium glutamicum (strain ATCC 13032 / DSM 20300 / JCM 1318 / BCRC 11384 / CCUG 27702 / LMG 3730 / NBRC 12168 / NCIMB 10025 / NRRL B-2784 / 534).